The primary structure comprises 290 residues: RWD domain-containing protein 2B (290 aa).

The RWD domain maps to 12-136; the sequence is SELDLLASMF…EWVKEHAFDY (125 aa).

The polypeptide is RWD domain-containing protein 2B (Rwdd2b) (Mus musculus (Mouse)).